The chain runs to 485 residues: GTPase Obg (485 aa).

Positions 2 to 159 constitute an Obg domain; that stretch reads PRFVDRVVIH…RELTLELKTV (158 aa). The 182-residue stretch at 160–341 folds into the OBG-type G domain; the sequence is ADVGLIGFPS…FIFALWDMVR (182 aa). GTP contacts are provided by residues 166–173, 191–195, 212–215, 292–295, and 322–324; these read GFPSAGKS, FTTLV, DVPG, NKID, and STV. S173 and T193 together coordinate Mg(2+). The 79-residue stretch at 359–437 folds into the OCT domain; sequence PIAVDETGFS…IGDMTFDWEP (79 aa). The segment at 439 to 485 is disordered; the sequence is TPAGVDVQMSGRGTDTRLEQTDRVSAAERKIARRERRQSTDEPGGEE. A compositionally biased stretch (basic and acidic residues) spans 452-468; sequence TDTRLEQTDRVSAAERK.

It belongs to the TRAFAC class OBG-HflX-like GTPase superfamily. OBG GTPase family. Monomer. Requires Mg(2+) as cofactor.

It is found in the cytoplasm. In terms of biological role, an essential GTPase which binds GTP, GDP and possibly (p)ppGpp with moderate affinity, with high nucleotide exchange rates and a fairly low GTP hydrolysis rate. Plays a role in control of the cell cycle, stress response, ribosome biogenesis and in those bacteria that undergo differentiation, in morphogenesis control. In Mycobacterium sp. (strain MCS), this protein is GTPase Obg.